Reading from the N-terminus, the 426-residue chain is ORC1-type DNA replication protein 1 (426 aa).

ATP-binding positions include 62–66 (VGKTL), Tyr-211, and Arg-223.

Belongs to the CDC6/cdc18 family.

In terms of biological role, involved in regulation of DNA replication. In Haloarcula marismortui (strain ATCC 43049 / DSM 3752 / JCM 8966 / VKM B-1809) (Halobacterium marismortui), this protein is ORC1-type DNA replication protein 1 (cdc6a).